Consider the following 282-residue polypeptide: Pantothenate synthetase (282 aa).

Residue 30-37 (MGYLHEGH) coordinates ATP. His37 serves as the catalytic Proton donor. Residue Gln61 participates in (R)-pantoate binding. Gln61 contacts beta-alanine. Residue 147 to 150 (GMKD) coordinates ATP. Position 153 (Gln153) interacts with (R)-pantoate. Residues Val176 and 184–187 (KSSR) each bind ATP.

It belongs to the pantothenate synthetase family. As to quaternary structure, homodimer.

It localises to the cytoplasm. It carries out the reaction (R)-pantoate + beta-alanine + ATP = (R)-pantothenate + AMP + diphosphate + H(+). Its pathway is cofactor biosynthesis; (R)-pantothenate biosynthesis; (R)-pantothenate from (R)-pantoate and beta-alanine: step 1/1. Catalyzes the condensation of pantoate with beta-alanine in an ATP-dependent reaction via a pantoyl-adenylate intermediate. The protein is Pantothenate synthetase of Bacillus cereus (strain ZK / E33L).